Here is a 195-residue protein sequence, read N- to C-terminus: Pyruvoyl-dependent arginine decarboxylase AaxB (195 aa).

Pyruvic acid (Ser) is present on serine 53.

It belongs to the pyruvoyl-dependent arginine decarboxylase family. As to quaternary structure, trimer of an alpha-beta dimer. The cofactor is pyruvate.

The protein resides in the cytoplasm. The catalysed reaction is L-arginine + H(+) = agmatine + CO2. Its function is as follows. Part of the AaxABC system, catalyzes the decarboxylation of L-arginine. The arginine uptake by the bacterium in the macrophage may be a virulence factor against the host innate immune response. This chain is Pyruvoyl-dependent arginine decarboxylase AaxB (aaxB), found in Chlamydia abortus (strain DSM 27085 / S26/3) (Chlamydophila abortus).